We begin with the raw amino-acid sequence, 85 residues long: UPF0291 protein SGO_0570 (85 aa).

The disordered stretch occupies residues 56 to 85 (EDGNDVTPEKLRQVQREKGLHGRSLDDPNS). Over residues 62 to 85 (TPEKLRQVQREKGLHGRSLDDPNS) the composition is skewed to basic and acidic residues.

Belongs to the UPF0291 family.

Its subcellular location is the cytoplasm. In Streptococcus gordonii (strain Challis / ATCC 35105 / BCRC 15272 / CH1 / DL1 / V288), this protein is UPF0291 protein SGO_0570.